Consider the following 348-residue polypeptide: Phenylalanine--tRNA ligase alpha subunit (348 aa).

Residue Glu262 participates in Mg(2+) binding.

This sequence belongs to the class-II aminoacyl-tRNA synthetase family. Phe-tRNA synthetase alpha subunit type 1 subfamily. Tetramer of two alpha and two beta subunits. Mg(2+) serves as cofactor.

Its subcellular location is the cytoplasm. The catalysed reaction is tRNA(Phe) + L-phenylalanine + ATP = L-phenylalanyl-tRNA(Phe) + AMP + diphosphate + H(+). In Streptococcus pneumoniae (strain JJA), this protein is Phenylalanine--tRNA ligase alpha subunit.